Here is a 249-residue protein sequence, read N- to C-terminus: Type I iodothyronine deiodinase (249 aa).

Residues 1–12 are Extracellular-facing; the sequence is MELPLPGLWLKR. The chain crosses the membrane as a helical; Signal-anchor for type III membrane protein span at residues 13 to 33; it reads LWVLFQVALHVAMGKVLMTLF. Topologically, residues 34–249 are cytoplasmic; the sequence is PGRVKQDILA…VRAVLEKLHS (216 aa). Sec-126 is an active-site residue. Residue Sec-126 is a non-standard amino acid, selenocysteine.

This sequence belongs to the iodothyronine deiodinase family. In terms of assembly, predominantly monomer. Can form homodimers but homodimerization is not essential for enzyme activity.

It is found in the cell membrane. The protein localises to the endoplasmic reticulum membrane. It localises to the basolateral cell membrane. It carries out the reaction 3,3',5-triiodo-L-thyronine + iodide + A + H(+) = L-thyroxine + AH2. The enzyme catalyses 3,3',5'-triiodo-L-thyronine + iodide + A + H(+) = L-thyroxine + AH2. It catalyses the reaction 3,3'-diiodo-L-thyronine + iodide + A + H(+) = 3,3',5'-triiodo-L-thyronine + AH2. The catalysed reaction is 3,3'-diiodo-L-thyronine + iodide + A + H(+) = 3,3',5-triiodo-L-thyronine + AH2. It carries out the reaction 3'-iodo-L-thyronine + iodide + A + H(+) = 3',5'-diiodo-L-thyronine + AH2. The enzyme catalyses 3-iodo-L-thyronine + iodide + A + H(+) = 3,5-diiodo-L-thyronine + AH2. It catalyses the reaction 3-iodo-L-thyronine + iodide + A + H(+) = 3,3'-diiodo-L-thyronine + AH2. The catalysed reaction is 3,3'-diiodothyronamine + iodide + A + H(+) = 3,3',5'-triiodothyronamine + AH2. It carries out the reaction 3'-iodothyronamine + iodide + A + H(+) = 3',5'-diiodothyronamine + AH2. The enzyme catalyses 3-iodothyronamine + iodide + A + H(+) = 3,3'-diiodothyronamine + AH2. It catalyses the reaction 3,3'-diiodothyronamine + iodide + A + H(+) = 3,3',5-triiodothyronamine + AH2. The catalysed reaction is 3-iodothyronamine + iodide + A + H(+) = 3,5-diiodothyronamine + AH2. It carries out the reaction 3,3'-diiodo-L-thyronine sulfate + iodide + A + H(+) = 3,3',5'-triiodo-L-thyronine sulfate + AH2. The enzyme catalyses 3,3',5'-triiodo-L-thyronine sulfate + iodide + A + H(+) = L-thyroxine sulfate + AH2. It catalyses the reaction 3,3'-diiodo-L-thyronine sulfate + iodide + A + H(+) = 3,3',5-triiodo-L-thyronine sulfate + AH2. Its function is as follows. Plays a crucial role in the metabolism of thyroid hormones (TH) and has specific roles in TH activation and inactivation by deiodination. Catalyzes the deiodination of L-thyroxine (T4) to 3,5,3'-triiodothyronine (T3) and 3,3',5'-triiodothyronine (rT3) to 3,3'-diiodothyronine (3,3'-T2) via outer-ring deiodination (ORD). Catalyzes the deiodination of T4 to rT3, T3 to 3,3'-T2, 3,5-diiodothyronine (3,5-T2) to 3-monoiodothyronine (3-T1) and 3,3'-T2 to 3-T1 via inner-ring deiodination (IRD). Catalyzes the deiodination of 3',5'-diiodothyronine (3',5'-T2) to 3'-monoiodothyronine (3'-T1) via ORD. Catalyzes the phenolic ring deiodinations of 3,3',5'-triiodothyronamine, 3',5'-diiodothyronamine and 3,3'-diiodothyronamine as well as tyrosyl ring deiodinations of 3,5,3'-triiodothyronamine and 3,5-diiodothyronamine. Catalyzes the deiodination of L-thyroxine sulfate and 3,3',5-triiodo-L-thyronine sulfate via IRD and of 3,3',5'-triiodo-L-thyronine sulfate via ORD. In Sus scrofa (Pig), this protein is Type I iodothyronine deiodinase (DIO1).